Reading from the N-terminus, the 415-residue chain is Multidrug resistance protein MdtA (415 aa).

Residues 1-21 form the signal peptide; that stretch reads MKGSYKSRWVIVIVVVIAAIA. The segment covering 31–47 has biased composition (polar residues); that stretch reads DSQSAAPGATKQAQQSP. Disordered regions lie at residues 31–60 and 392–415; these read DSQSAAPGATKQAQQSPAGGRRGMRSGPLA and EAQSATTPEEKATSREYAKKGARS. The span at 399-415 shows a compositional bias: basic and acidic residues; the sequence is PEEKATSREYAKKGARS.

This sequence belongs to the membrane fusion protein (MFP) (TC 8.A.1) family. In terms of assembly, part of a tripartite efflux system composed of MdtA, MdtB and MdtC.

The protein localises to the cell inner membrane. The MdtABC tripartite complex confers resistance against novobiocin and deoxycholate. The polypeptide is Multidrug resistance protein MdtA (Escherichia coli O8 (strain IAI1)).